Reading from the N-terminus, the 218-residue chain is Nuclear cap-binding protein subunit 2 (218 aa).

Residues Tyr-24, Tyr-49, 118 to 122, 129 to 133, and 139 to 140 contribute to the mRNA site; these read TIDLD, RQFGR, and QV. Residues 46-124 enclose the RRM domain; that stretch reads ATIYVGNLSF…REITIDLDPG (79 aa). The segment covering 176–194 has biased composition (basic residues); that stretch reads DPHKNHHHHHHGHHHHHGQ. The interval 176–200 is disordered; it reads DPHKNHHHHHHGHHHHHGQPHAAAA.

It belongs to the RRM NCBP2 family. Component of the nuclear cap-binding complex (CBC).

It localises to the nucleus. Its function is as follows. Component of the cap-binding complex (CBC) involved in the nuclear export of capped U snRNAs. The CBC complex is required for efficient pre-mRNA splicing through efficient commitment complex and spliceosome formation; and involved in rRNA processing at sites A0, A1 and A2. The sequence is that of Nuclear cap-binding protein subunit 2 (CBC2) from Eremothecium gossypii (strain ATCC 10895 / CBS 109.51 / FGSC 9923 / NRRL Y-1056) (Yeast).